Reading from the N-terminus, the 375-residue chain is Growth/differentiation factor 8 (375 aa).

The signal sequence occupies residues 1 to 18 (MQKLQISVYIYLFMLIVA). The propeptide occupies 19 to 266 (GPVDLNENSE…VTDTPKRSRR (248 aa)). N-linked (GlcNAc...) asparagine glycosylation is found at Asn47 and Asn71. Disulfide bonds link Cys272–Cys282, Cys281–Cys340, Cys309–Cys372, and Cys313–Cys374.

It belongs to the TGF-beta family. Homodimer; disulfide-linked. Interacts with WFIKKN2, leading to inhibit its activity. Interacts with FSTL3. Synthesized as large precursor molecule that undergoes proteolytic cleavage to generate an N-terminal propeptide and a disulfide linked C-terminal dimer, which is the biologically active molecule. The circulating form consists of a latent complex of the C-terminal dimer and other proteins, including its propeptide, which maintain the C-terminal dimer in a latent, inactive state. Ligand activation requires additional cleavage of the prodomain by a tolloid-like metalloproteinase.

The protein localises to the secreted. In terms of biological role, acts specifically as a negative regulator of skeletal muscle growth. In Bos gaurus (Seladang), this protein is Growth/differentiation factor 8 (MSTN).